The following is a 151-amino-acid chain: Transcriptional regulator MraZ (151 aa).

SpoVT-AbrB domains follow at residues 5–52 (ATAV…PLMN) and 81–124 (ATEC…SDVE).

Belongs to the MraZ family. In terms of assembly, forms oligomers.

It is found in the cytoplasm. The protein localises to the nucleoid. In Haemophilus influenzae (strain PittGG), this protein is Transcriptional regulator MraZ.